Here is a 699-residue protein sequence, read N- to C-terminus: Transcription factor MYC2 (699 aa).

A disordered region spans residues 25 to 60; the sequence is PWGAASTPPPPPPPPHHHHQQQQQQVLPPPAAAPAA. Residues 93-158 are JAZ-interaction domain; that stretch reads IDVSTGASLL…AAPDEAVEEE (66 aa). The tract at residues 290 to 530 is disordered; it reads DISVSKPPPP…EPLNHVEAER (241 aa). The span at 306–321 shows a compositional bias: polar residues; it reads HFENGSTSTLTENPSP. 2 stretches are compositionally biased toward low complexity: residues 335 to 349 and 387 to 412; these read PQRQQQQQQSSQAQQ and SSSGRRNPSPAPPAATASLTTAPGSL. Composition is skewed to polar residues over residues 413-449 and 459-472; these read FSQHTPTLTAAANDAKSNNQKRSMEATSRASNTNNHP and SFSSAPTTRPSTGT. Residues 478–494 are compositionally biased toward basic and acidic residues; it reads SESDHSDLEASVREVES. Residues 506–514 carry the Nuclear localization signal motif; the sequence is KRPRKRGRK. Residues 507–516 show a composition bias toward basic residues; the sequence is RPRKRGRKPA. The span at 517 to 530 shows a compositional bias: basic and acidic residues; that stretch reads NGREEPLNHVEAER. Residues 520-533 form a basic motif; degenerate region; sequence EEPLNHVEAERQRR. One can recognise a bHLH domain in the interval 520-569; it reads EEPLNHVEAERQRREKLNQRFYALRAVVPNVSKMDKASLLGDAISYINEL. The segment at 534–569 is helix-loop-helix motif; that stretch reads EKLNQRFYALRAVVPNVSKMDKASLLGDAISYINEL. Residues 582–611 form a disordered region; that stretch reads TLQSQMESLKKERDARPPAPSGGGGDGGAR.

It belongs to the bHLH protein family. In terms of assembly, interacts with TIFY3/JAZ1. Highly expressed in spikelets and floral organs.

It localises to the nucleus. Functionally, transcriptional activator involved in jasmonate (JA) signaling pathway during spikelet development. Binds to the G2 region G-box (5'-CACGTG-3') of the MADS1 promoter and thus directly regulates the expression of MADS1. Its function in MADS1 activation is abolished by TIFY3/JAZ1 which directly target MYC2 during spikelet development. In Oryza sativa subsp. japonica (Rice), this protein is Transcription factor MYC2.